The primary structure comprises 283 residues: ATP phosphoribosyltransferase (283 aa).

The protein belongs to the ATP phosphoribosyltransferase family. Long subfamily. Requires Mg(2+) as cofactor.

It localises to the cytoplasm. The enzyme catalyses 1-(5-phospho-beta-D-ribosyl)-ATP + diphosphate = 5-phospho-alpha-D-ribose 1-diphosphate + ATP. The protein operates within amino-acid biosynthesis; L-histidine biosynthesis; L-histidine from 5-phospho-alpha-D-ribose 1-diphosphate: step 1/9. With respect to regulation, feedback inhibited by histidine. Functionally, catalyzes the condensation of ATP and 5-phosphoribose 1-diphosphate to form N'-(5'-phosphoribosyl)-ATP (PR-ATP). Has a crucial role in the pathway because the rate of histidine biosynthesis seems to be controlled primarily by regulation of HisG enzymatic activity. The polypeptide is ATP phosphoribosyltransferase (Phocaeicola vulgatus (strain ATCC 8482 / DSM 1447 / JCM 5826 / CCUG 4940 / NBRC 14291 / NCTC 11154) (Bacteroides vulgatus)).